The sequence spans 319 residues: Acetyl esterase (319 aa).

Positions 91–93 (HGG) match the Involved in the stabilization of the negatively charged intermediate by the formation of the oxyanion hole motif. Catalysis depends on residues Ser165, Asp262, and His292.

The protein belongs to the 'GDXG' lipolytic enzyme family. Homodimer. Interacts with MalT and MelA.

It is found in the cytoplasm. In terms of biological role, displays esterase activity towards short chain fatty esters (acyl chain length of up to 8 carbons). Able to hydrolyze triacetylglycerol (triacetin) and tributyrylglycerol (tributyrin), but not trioleylglycerol (triolein) or cholesterol oleate. Negatively regulates MalT activity by antagonizing maltotriose binding. Inhibits MelA galactosidase activity. This is Acetyl esterase from Escherichia coli (strain ATCC 8739 / DSM 1576 / NBRC 3972 / NCIMB 8545 / WDCM 00012 / Crooks).